Consider the following 424-residue polypeptide: MRPLFIRRARQLVTLAGSSAAPLVREKMNDLQIIENGSVWIERGVIIAVGPDDELAHRFADRIGEADVIDARGKTVTPGLIDPHTHLVYAGSREHEWTMRLRGATYMEIMNAGGGIHATTKATREASEEMLYEESKRRLDLFLLHGVTTVEAKSGYGLSFEGEIKQLEVAKRLHDTHPVDVVSTFLGAHAVPPEWKDDRDGYIRLIMEVMIPEVSRRGLAEFNDVFCERGVFTPDEARRILEAGKAHGLTPKIHADEIEPYGGAELAAEVGAISADHLLRASDEGLRRMAERGVIGVLLPGTAFFLMTQAADARRLIDNGVPVALATDCNPGSSPTVSLPLVMSLACLHMRMTPAEALAAATINAAHAIGRSHVIGSLEPGKKADLAIFNAANYMQIMYYYGVNHTEMVIKGGKIVVNEGKVCI.

Fe(3+)-binding residues include His84 and His86. Zn(2+) contacts are provided by His84 and His86. 4-imidazolone-5-propanoate is bound by residues Arg93, Tyr156, and His189. Tyr156 is a binding site for N-formimidoyl-L-glutamate. Fe(3+) is bound at residue His254. Zn(2+) is bound at residue His254. 4-imidazolone-5-propanoate is bound at residue Glu257. Residue Asp328 participates in Fe(3+) binding. Asp328 contributes to the Zn(2+) binding site. N-formimidoyl-L-glutamate is bound by residues Asn330 and Gly332. Ser333 is a 4-imidazolone-5-propanoate binding site.

It belongs to the metallo-dependent hydrolases superfamily. HutI family. The cofactor is Zn(2+). Fe(3+) is required as a cofactor.

The protein resides in the cytoplasm. It catalyses the reaction 4-imidazolone-5-propanoate + H2O = N-formimidoyl-L-glutamate. It functions in the pathway amino-acid degradation; L-histidine degradation into L-glutamate; N-formimidoyl-L-glutamate from L-histidine: step 3/3. Catalyzes the hydrolytic cleavage of the carbon-nitrogen bond in imidazolone-5-propanoate to yield N-formimidoyl-L-glutamate. It is the third step in the universal histidine degradation pathway. In Geobacillus thermodenitrificans (strain NG80-2), this protein is Imidazolonepropionase.